The chain runs to 265 residues: 4-hydroxy-tetrahydrodipicolinate reductase (265 aa).

NAD(+)-binding positions include 7 to 12 (GASGRM), Asp-33, 96 to 98 (GTT), and 120 to 123 (AANF). His-153 functions as the Proton donor/acceptor in the catalytic mechanism. His-154 contributes to the (S)-2,3,4,5-tetrahydrodipicolinate binding site. Lys-157 serves as the catalytic Proton donor. (S)-2,3,4,5-tetrahydrodipicolinate is bound at residue 163–164 (GT).

This sequence belongs to the DapB family.

The protein resides in the cytoplasm. The catalysed reaction is (S)-2,3,4,5-tetrahydrodipicolinate + NAD(+) + H2O = (2S,4S)-4-hydroxy-2,3,4,5-tetrahydrodipicolinate + NADH + H(+). It catalyses the reaction (S)-2,3,4,5-tetrahydrodipicolinate + NADP(+) + H2O = (2S,4S)-4-hydroxy-2,3,4,5-tetrahydrodipicolinate + NADPH + H(+). It functions in the pathway amino-acid biosynthesis; L-lysine biosynthesis via DAP pathway; (S)-tetrahydrodipicolinate from L-aspartate: step 4/4. Its function is as follows. Catalyzes the conversion of 4-hydroxy-tetrahydrodipicolinate (HTPA) to tetrahydrodipicolinate. The polypeptide is 4-hydroxy-tetrahydrodipicolinate reductase (Cupriavidus taiwanensis (strain DSM 17343 / BCRC 17206 / CCUG 44338 / CIP 107171 / LMG 19424 / R1) (Ralstonia taiwanensis (strain LMG 19424))).